Here is a 355-residue protein sequence, read N- to C-terminus: Cytoplasmic tRNA 2-thiolation protein 1 (355 aa).

A disordered region spans residues 320–341; it reads GIGRPRGVNGDHNKETKKPGSV. Residues 328-337 are compositionally biased toward basic and acidic residues; the sequence is NGDHNKETKK.

It belongs to the TtcA family. CTU1/NCS6/ATPBD3 subfamily.

It is found in the cytoplasm. Its pathway is tRNA modification; 5-methoxycarbonylmethyl-2-thiouridine-tRNA biosynthesis. Functionally, plays a central role in 2-thiolation of mcm(5)S(2)U at tRNA wobble positions of tRNA(Lys), tRNA(Glu) and tRNA(Gln). Directly binds tRNAs and probably acts by catalyzing adenylation of tRNAs, an intermediate required for 2-thiolation. It is unclear whether it acts as a sulfurtransferase that transfers sulfur from thiocarboxylated URM1 onto the uridine of tRNAs at wobble position. The sequence is that of Cytoplasmic tRNA 2-thiolation protein 1 from Arabidopsis thaliana (Mouse-ear cress).